The following is a 233-amino-acid chain: Ciliary microtubule inner protein 6 (233 aa).

2 stretches are compositionally biased toward basic and acidic residues: residues Met1 to Asp14 and Ala21 to Pro33. Residues Met1–Asp45 are disordered. The interval Gly127–Thr159 is mn. Residues Leu192–Thr233 are disordered. Over residues Thr195–Thr233 the composition is skewed to polar residues.

Its subcellular location is the cell projection. The protein localises to the cilium. The protein is Ciliary microtubule inner protein 6 (Cimip6) of Mus musculus (Mouse).